Consider the following 259-residue polypeptide: Acetylglutamate kinase (259 aa).

Residues glycine 46–glycine 47, arginine 68, and asparagine 162 each bind substrate.

Belongs to the acetylglutamate kinase family. ArgB subfamily.

The protein localises to the cytoplasm. The enzyme catalyses N-acetyl-L-glutamate + ATP = N-acetyl-L-glutamyl 5-phosphate + ADP. It functions in the pathway amino-acid biosynthesis; L-arginine biosynthesis; N(2)-acetyl-L-ornithine from L-glutamate: step 2/4. In terms of biological role, catalyzes the ATP-dependent phosphorylation of N-acetyl-L-glutamate. In Roseiflexus castenholzii (strain DSM 13941 / HLO8), this protein is Acetylglutamate kinase.